A 117-amino-acid polypeptide reads, in one-letter code: G antigen 12J (117 aa).

The tract at residues 1-117 is disordered; sequence MSWRGRSTYY…PEEGEKQSQC (117 aa). 2 stretches are compositionally biased toward acidic residues: residues 32–45 and 87–96; these read FSDE…EEGE and ECEDGPDGQE. The segment covering 103–117 has biased composition (basic and acidic residues); the sequence is EEVKTPEEGEKQSQC.

It belongs to the GAGE family.

The polypeptide is G antigen 12J (GAGE12J) (Homo sapiens (Human)).